The following is a 376-amino-acid chain: Probable transcription factor At1g61730 (376 aa).

The segment at 1-150 (MTKKLNPLED…RVKKDEESVK (150 aa)) is disordered. Over residues 17 to 40 (SDEDDVETSEAGEASDDSSSSEED) the composition is skewed to acidic residues. A Phosphoserine modification is found at serine 49. Over residues 49–72 (SPSATTAAAPPAKSTAVSTAADSD) the composition is skewed to low complexity. Over residues 73-83 (SGSETETDSDS) the composition is skewed to acidic residues. A compositionally biased stretch (polar residues) spans 87–103 (NPPNSGSGKTIALNTVN).

The protein belongs to the GeBP family. In terms of assembly, interacts with DEK3.

This Arabidopsis thaliana (Mouse-ear cress) protein is Probable transcription factor At1g61730.